The chain runs to 841 residues: Probable alpha-glucuronidase A (841 aa).

Residues 1 to 20 (MRGLNLFQLILALLLSMVAA) form the signal peptide. N-linked (GlcNAc...) asparagine glycans are attached at residues N51, N76, N85, N149, N222, N279, N310, N343, N450, N465, N527, N576, N682, N723, and N732.

It belongs to the glycosyl hydrolase 67 family.

It is found in the secreted. It carries out the reaction an alpha-D-glucuronoside + H2O = D-glucuronate + an alcohol. Alpha-glucuronidase involved in the hydrolysis of xylan, a major structural heterogeneous polysaccharide found in plant biomass representing the second most abundant polysaccharide in the biosphere, after cellulose. Releases 4-O-methylglucuronic acid from xylan. The sequence is that of Probable alpha-glucuronidase A (aguA) from Aspergillus niger (strain ATCC MYA-4892 / CBS 513.88 / FGSC A1513).